A 415-amino-acid chain; its full sequence is Serine hydroxymethyltransferase (415 aa).

(6S)-5,6,7,8-tetrahydrofolate is bound by residues Leu-117 and 121-123 (GHL). Position 226 is an N6-(pyridoxal phosphate)lysine (Lys-226). Residue Glu-241 participates in (6S)-5,6,7,8-tetrahydrofolate binding.

This sequence belongs to the SHMT family. In terms of assembly, homodimer. It depends on pyridoxal 5'-phosphate as a cofactor.

It localises to the cytoplasm. It catalyses the reaction (6R)-5,10-methylene-5,6,7,8-tetrahydrofolate + glycine + H2O = (6S)-5,6,7,8-tetrahydrofolate + L-serine. The protein operates within one-carbon metabolism; tetrahydrofolate interconversion. It functions in the pathway amino-acid biosynthesis; glycine biosynthesis; glycine from L-serine: step 1/1. In terms of biological role, catalyzes the reversible interconversion of serine and glycine with tetrahydrofolate (THF) serving as the one-carbon carrier. This reaction serves as the major source of one-carbon groups required for the biosynthesis of purines, thymidylate, methionine, and other important biomolecules. Also exhibits THF-independent aldolase activity toward beta-hydroxyamino acids, producing glycine and aldehydes, via a retro-aldol mechanism. The protein is Serine hydroxymethyltransferase of Bacillus licheniformis (strain ATCC 14580 / DSM 13 / JCM 2505 / CCUG 7422 / NBRC 12200 / NCIMB 9375 / NCTC 10341 / NRRL NRS-1264 / Gibson 46).